The following is a 196-amino-acid chain: Molybdopterin synthase catalytic subunit (196 aa).

Substrate is bound by residues histidine 110 to arginine 111, lysine 126, and lysine 133 to glutamate 135. Positions glycine 142–serine 196 are disordered. Over residues alanine 147–methionine 168 the composition is skewed to basic and acidic residues.

The protein belongs to the MoaE family. MOCS2B subfamily. As to quaternary structure, heterotetramer; composed of 2 small (MOCS2A) and 2 large (MOCS2B) subunits.

The protein localises to the cytoplasm. The enzyme catalyses 2 [molybdopterin-synthase sulfur-carrier protein]-C-terminal-Gly-aminoethanethioate + cyclic pyranopterin phosphate + H2O = molybdopterin + 2 [molybdopterin-synthase sulfur-carrier protein]-C-terminal Gly-Gly + 2 H(+). It functions in the pathway cofactor biosynthesis; molybdopterin biosynthesis. Catalytic subunit of the molybdopterin synthase complex, a complex that catalyzes the conversion of precursor Z into molybdopterin. Acts by mediating the incorporation of 2 sulfur atoms from thiocarboxylated MOCS2A into precursor Z to generate a dithiolene group. The chain is Molybdopterin synthase catalytic subunit from Sclerotinia sclerotiorum (strain ATCC 18683 / 1980 / Ss-1) (White mold).